A 554-amino-acid polypeptide reads, in one-letter code: Glucose-6-phosphate isomerase 2 (554 aa).

E359 acts as the Proton donor in catalysis. Residues H390 and K518 contribute to the active site.

It belongs to the GPI family.

It localises to the cytoplasm. It carries out the reaction alpha-D-glucose 6-phosphate = beta-D-fructose 6-phosphate. It functions in the pathway carbohydrate biosynthesis; gluconeogenesis. The protein operates within carbohydrate degradation; glycolysis; D-glyceraldehyde 3-phosphate and glycerone phosphate from D-glucose: step 2/4. Catalyzes the reversible isomerization of glucose-6-phosphate to fructose-6-phosphate. This chain is Glucose-6-phosphate isomerase 2, found in Pseudomonas putida (strain ATCC 47054 / DSM 6125 / CFBP 8728 / NCIMB 11950 / KT2440).